Consider the following 879-residue polypeptide: Mediator of RNA polymerase II transcription subunit 14 (879 aa).

Belongs to the Mediator complex subunit 14 family. In terms of assembly, component of the Mediator complex.

The protein resides in the nucleus. In terms of biological role, component of the Mediator complex, a coactivator involved in the regulated transcription of nearly all RNA polymerase II-dependent genes. Mediator functions as a bridge to convey information from gene-specific regulatory proteins to the basal RNA polymerase II transcription machinery. Mediator is recruited to promoters by direct interactions with regulatory proteins and serves as a scaffold for the assembly of a functional preinitiation complex with RNA polymerase II and the general transcription factors. The polypeptide is Mediator of RNA polymerase II transcription subunit 14 (med14) (Schizosaccharomyces pombe (strain 972 / ATCC 24843) (Fission yeast)).